Reading from the N-terminus, the 156-residue chain is Small ribosomal subunit protein uS7 (156 aa).

It belongs to the universal ribosomal protein uS7 family. As to quaternary structure, part of the 30S ribosomal subunit. Contacts proteins S9 and S11.

Functionally, one of the primary rRNA binding proteins, it binds directly to 16S rRNA where it nucleates assembly of the head domain of the 30S subunit. Is located at the subunit interface close to the decoding center, probably blocks exit of the E-site tRNA. The sequence is that of Small ribosomal subunit protein uS7 from Sinorhizobium medicae (strain WSM419) (Ensifer medicae).